The sequence spans 871 residues: Alanine--tRNA ligase (871 aa).

The Zn(2+) site is built by His559, His563, Cys661, and His665.

It belongs to the class-II aminoacyl-tRNA synthetase family. Requires Zn(2+) as cofactor.

It localises to the cytoplasm. It carries out the reaction tRNA(Ala) + L-alanine + ATP = L-alanyl-tRNA(Ala) + AMP + diphosphate. Catalyzes the attachment of alanine to tRNA(Ala) in a two-step reaction: alanine is first activated by ATP to form Ala-AMP and then transferred to the acceptor end of tRNA(Ala). Also edits incorrectly charged Ser-tRNA(Ala) and Gly-tRNA(Ala) via its editing domain. This chain is Alanine--tRNA ligase, found in Aquifex pyrophilus.